The primary structure comprises 615 residues: DNA mismatch repair protein MutL (615 aa).

The disordered stretch occupies residues 362–397; it reads HFAEPAVREPVAPRYSPAPASGSRPAASWPNAQPGY. Residues 373-391 are compositionally biased toward low complexity; it reads APRYSPAPASGSRPAASWP.

It belongs to the DNA mismatch repair MutL/HexB family.

In terms of biological role, this protein is involved in the repair of mismatches in DNA. It is required for dam-dependent methyl-directed DNA mismatch repair. May act as a 'molecular matchmaker', a protein that promotes the formation of a stable complex between two or more DNA-binding proteins in an ATP-dependent manner without itself being part of a final effector complex. The polypeptide is DNA mismatch repair protein MutL (Escherichia coli O6:H1 (strain CFT073 / ATCC 700928 / UPEC)).